The following is a 281-amino-acid chain: Lectin alpha chain (281 aa).

N-linked (GlcNAc...) asparagine glycans are attached at residues Asn-35, Asn-82, and Asn-140.

It belongs to the leguminous lectin family. As to quaternary structure, tetramer of 2 alpha and 2 beta chains. In terms of processing, glycosylated. Post-translationally, the beta chain is produced by partial proteolytic processing of the alpha chain.

Its function is as follows. D-galactose-binding lectin. The sequence is that of Lectin alpha chain from Lablab purpureus (Hyacinth bean).